The primary structure comprises 97 residues: Protein ParC (97 aa).

This chain is Protein ParC (parC), found in Escherichia coli.